A 396-amino-acid chain; its full sequence is NADH-quinone oxidoreductase subunit D 1 (396 aa).

It belongs to the complex I 49 kDa subunit family. In terms of assembly, NDH-1 is composed of 14 different subunits. Subunits NuoB, C, D, E, F, and G constitute the peripheral sector of the complex.

It localises to the cell inner membrane. It carries out the reaction a quinone + NADH + 5 H(+)(in) = a quinol + NAD(+) + 4 H(+)(out). Its function is as follows. NDH-1 shuttles electrons from NADH, via FMN and iron-sulfur (Fe-S) centers, to quinones in the respiratory chain. The immediate electron acceptor for the enzyme in this species is believed to be ubiquinone. Couples the redox reaction to proton translocation (for every two electrons transferred, four hydrogen ions are translocated across the cytoplasmic membrane), and thus conserves the redox energy in a proton gradient. This chain is NADH-quinone oxidoreductase subunit D 1, found in Beijerinckia indica subsp. indica (strain ATCC 9039 / DSM 1715 / NCIMB 8712).